A 312-amino-acid chain; its full sequence is Magnesium protoporphyrin IX methyltransferase, chloroplastic (312 aa).

The transit peptide at 1 to 39 (MPFAPSLLSSSSSVSQFLPRFPNATRFNVTPRSRAATVV) directs the protein to the chloroplast.

The protein belongs to the class I-like SAM-binding methyltransferase superfamily. Magnesium protoporphyrin O-methyltransferase family.

Its subcellular location is the plastid. The protein localises to the chloroplast membrane. The protein resides in the chloroplast thylakoid membrane. The enzyme catalyses Mg-protoporphyrin IX + S-adenosyl-L-methionine = Mg-protoporphyrin IX 13-monomethyl ester + S-adenosyl-L-homocysteine. The protein operates within porphyrin-containing compound metabolism; chlorophyll biosynthesis. With respect to regulation, regulated by the folate status via an increased concentration of S-adenosyl-homocysteine (AdoHcy), a potent inhibitor of most AdoMet-dependent methyltransferases. In terms of biological role, converts Mg-protoporphyrin IX to Mg-protoporphyrin IX methylester using S-adenosyl-L-methionine as a cofactor. Involved in chloroplast-to-nucleus signaling by acting as a negative effector of nuclear photosynthetic gene expression. The protein is Magnesium protoporphyrin IX methyltransferase, chloroplastic (CHLM) of Arabidopsis thaliana (Mouse-ear cress).